A 59-amino-acid polypeptide reads, in one-letter code: Sec-independent protein translocase protein TatA 1 (59 aa).

A helical membrane pass occupies residues 3–23 (FPLPWQLILILLVILVIFGAS).

Belongs to the TatA/E family. Forms a complex with TatC.

It localises to the cell inner membrane. Its function is as follows. Part of the twin-arginine translocation (Tat) system that transports large folded proteins containing a characteristic twin-arginine motif in their signal peptide across membranes. TatA could form the protein-conducting channel of the Tat system. The sequence is that of Sec-independent protein translocase protein TatA 1 from Aquifex aeolicus (strain VF5).